A 403-amino-acid chain; its full sequence is Neuromedin U receptor homolog nmur-2 (403 aa).

The Extracellular portion of the chain corresponds to 1–27 (MSQCTVEYNVSEITEYVLSTLGERCQS). A helical transmembrane segment spans residues 28–48 (AGIVIPTVIIYGTIFLLGLFG). Topologically, residues 49 to 68 (NICTCIVIAANKSMHNPTNY) are cytoplasmic. Residues 69–89 (YLFSLAVSDIIALILGLPMEF) traverse the membrane as a helical segment. The Extracellular portion of the chain corresponds to 90 to 109 (YQSLDYSYPYRFSEGICKAR). Residues 110 to 130 (AFLIEFTSYASIMIICCFSFE) form a helical membrane-spanning segment. At 131-151 (RWLAICHPLRSKIFSTLWRAN) the chain is on the cytoplasmic side. A helical transmembrane segment spans residues 152 to 172 (VLIILAWTISFVCALPIAFIV). The Extracellular portion of the chain corresponds to 173–216 (QINKLPLPEDAKYQPWTNKVSTDGIFVLHTEFCAMNQSRPDQQK). The chain crosses the membrane as a helical span at residues 217–237 (MIIIFAFTVFFVIPAIAIVIM). At 238–268 (YAHIAVQLESSEIDLKGDKMVKKRRNKSNRT) the chain is on the cytoplasmic side. A helical transmembrane segment spans residues 269 to 289 (VLKMLLSVVITFFICWLPFHI). Over 290–304 (QRLLSVYTTWSETTT) the chain is Extracellular. Residues 305-325 (ISPPVQFLSMIVFYISGFCYY) form a helical membrane-spanning segment. Residues 326-403 (SNSAANPILY…PHRKLEVHNY (78 aa)) are Cytoplasmic-facing.

This sequence belongs to the G-protein coupled receptor 1 family.

It is found in the membrane. Putative G protein-coupled receptor for pyrokinin-like neuropeptide derived from the processing of the neuropeptide precursor capa-1. This chain is Neuromedin U receptor homolog nmur-2, found in Caenorhabditis elegans.